The primary structure comprises 161 residues: Transcriptional repressor NrdR (161 aa).

A zinc finger spans residues 3–34 (CPYCGARDARVIDSRELNGGESIRRRRECIAC). The region spanning 49–139 (LMVVKRDGRR…VYRRFADLED (91 aa)) is the ATP-cone domain.

Belongs to the NrdR family. Zn(2+) serves as cofactor.

Negatively regulates transcription of bacterial ribonucleotide reductase nrd genes and operons by binding to NrdR-boxes. This is Transcriptional repressor NrdR from Thermomicrobium roseum (strain ATCC 27502 / DSM 5159 / P-2).